The chain runs to 373 residues: ATP phosphoribosyltransferase regulatory subunit (373 aa).

This sequence belongs to the class-II aminoacyl-tRNA synthetase family. HisZ subfamily. In terms of assembly, heteromultimer composed of HisG and HisZ subunits.

The protein localises to the cytoplasm. It functions in the pathway amino-acid biosynthesis; L-histidine biosynthesis; L-histidine from 5-phospho-alpha-D-ribose 1-diphosphate: step 1/9. Functionally, required for the first step of histidine biosynthesis. May allow the feedback regulation of ATP phosphoribosyltransferase activity by histidine. In Rhizobium johnstonii (strain DSM 114642 / LMG 32736 / 3841) (Rhizobium leguminosarum bv. viciae), this protein is ATP phosphoribosyltransferase regulatory subunit.